We begin with the raw amino-acid sequence, 1026 residues long: Multidrug resistance protein MdtC (1026 aa).

A run of 10 helical transmembrane segments spans residues 12–34 (VATLLLTLAIALCGVLGFRLLPV), 336–353 (QSLIIAVALVILVVFLFL), 360–382 (AIPALAVPVSLIGTFAAMYLCGF), 431–450 (VGFTVLSMSLSLVAVFLPLL), 463–485 (FAVTLSVAIMISLLISLTLTPML), 525–547 (HARWVLLLLLGTIALNVWLYISI), 853–875 (LLLILAAIITVYIVLGILYESYV), 895–917 (LEWFGAPFSLVALIGIMLLIGIV), 948–970 (LLRFRPIMMTTLAALFGALPLVL), and 985–1007 (TIVGGLLMSQVLTLYTTPVVYLF).

It belongs to the resistance-nodulation-cell division (RND) (TC 2.A.6) family. MdtC subfamily. Part of a tripartite efflux system composed of MdtA, MdtB and MdtC. MdtC forms a heteromultimer with MdtB.

The protein resides in the cell inner membrane. The protein is Multidrug resistance protein MdtC of Pectobacterium atrosepticum (strain SCRI 1043 / ATCC BAA-672) (Erwinia carotovora subsp. atroseptica).